Reading from the N-terminus, the 154-residue chain is MAANKERTFIAIKPDGVQRGLMGDIIKRFEQKGFRLVAMKFLQASQDLLRQHYIDLKDRPFYPGLVEYMNSGPVLAMVWEGLNVVKTGRVMLGETNPADSKPGTIRGDLCIQVGRNIIHGSDSVDSANKEIALWFKDEELVEYKSCAYEWVYEN.

6 residues coordinate ATP: K13, F61, R89, T95, R106, and N116. The Pros-phosphohistidine intermediate role is filled by H119.

Belongs to the NDK family. It depends on Mg(2+) as a cofactor.

It localises to the cytoplasm. The catalysed reaction is a 2'-deoxyribonucleoside 5'-diphosphate + ATP = a 2'-deoxyribonucleoside 5'-triphosphate + ADP. The enzyme catalyses a ribonucleoside 5'-diphosphate + ATP = a ribonucleoside 5'-triphosphate + ADP. Its function is as follows. Major role in the synthesis of nucleoside triphosphates other than ATP. The ATP gamma phosphate is transferred to the NDP beta phosphate via a ping-pong mechanism, using a phosphorylated active-site intermediate. In Xenopus laevis (African clawed frog), this protein is Nucleoside diphosphate kinase A2.